Consider the following 287-residue polypeptide: AA9 family lytic polysaccharide monooxygenase C (287 aa).

The first 16 residues, 1-16, serve as a signal peptide directing secretion; sequence MKSVLVALATATAVSA. Histidine 17 is a binding site for Cu(2+). N-linked (GlcNAc...) asparagine glycosylation occurs at asparagine 22. 2 disulfides stabilise this stretch: cysteine 77–cysteine 230 and cysteine 200–cysteine 284. Histidine 114 contributes to the Cu(2+) binding site. Histidine 216 and glutamine 225 together coordinate O2. Tyrosine 227 is a binding site for Cu(2+).

This sequence belongs to the polysaccharide monooxygenase AA9 family. Requires Cu(2+) as cofactor.

The protein resides in the secreted. It carries out the reaction [(1-&gt;4)-beta-D-glucosyl]n+m + reduced acceptor + O2 = 4-dehydro-beta-D-glucosyl-[(1-&gt;4)-beta-D-glucosyl]n-1 + [(1-&gt;4)-beta-D-glucosyl]m + acceptor + H2O.. Its function is as follows. Lytic polysaccharide monooxygenase (LPMO) that depolymerizes crystalline and amorphous polysaccharides via the oxidation of scissile alpha- or beta-(1-4)-glycosidic bonds, yielding C1 or C4 oxidation products. Catalysis by LPMOs requires the reduction of the active-site copper from Cu(II) to Cu(I) by a reducing agent and H(2)O(2) or O(2) as a cosubstrate. This Podospora anserina (strain S / ATCC MYA-4624 / DSM 980 / FGSC 10383) (Pleurage anserina) protein is AA9 family lytic polysaccharide monooxygenase C.